The following is a 536-amino-acid chain: Membrane protein insertase YidC (536 aa).

The next 5 helical transmembrane spans lie at 3 to 23 (LQRNFFILIFFFISFLLWKTW), 346 to 366 (ICGNWGVSIILITFIIKGITF), 417 to 437 (GGCFPLFIQMPIFLALYYMLI), 454 to 474 (LSDQDPFYVLPILMGVTMFFI), and 494 to 514 (IPILFTVFFLWFPSGLVLYYL).

The protein belongs to the OXA1/ALB3/YidC family. Type 1 subfamily. As to quaternary structure, interacts with the Sec translocase complex via SecD. Specifically interacts with transmembrane segments of nascent integral membrane proteins during membrane integration.

The protein localises to the cell membrane. Required for the insertion and/or proper folding and/or complex formation of integral membrane proteins into the membrane. Involved in integration of membrane proteins that insert both dependently and independently of the Sec translocase complex, as well as at least some lipoproteins. Aids folding of multispanning membrane proteins. This Buchnera aphidicola subsp. Baizongia pistaciae (strain Bp) protein is Membrane protein insertase YidC.